The chain runs to 250 residues: Pyrroloquinoline-quinone synthase (250 aa).

It belongs to the PqqC family.

The enzyme catalyses 6-(2-amino-2-carboxyethyl)-7,8-dioxo-1,2,3,4,7,8-hexahydroquinoline-2,4-dicarboxylate + 3 O2 = pyrroloquinoline quinone + 2 H2O2 + 2 H2O + H(+). It participates in cofactor biosynthesis; pyrroloquinoline quinone biosynthesis. Ring cyclization and eight-electron oxidation of 3a-(2-amino-2-carboxyethyl)-4,5-dioxo-4,5,6,7,8,9-hexahydroquinoline-7,9-dicarboxylic-acid to PQQ. This chain is Pyrroloquinoline-quinone synthase, found in Pseudomonas aeruginosa (strain LESB58).